Here is a 65-residue protein sequence, read N- to C-terminus: Period circadian protein (65 aa).

Residues 1 to 65 are disordered; the sequence is EGSGGSGSSG…VTLTESLLNK (65 aa). Residues 18-28 show a composition bias toward polar residues; that stretch reads VRMSSVTNTSN. Low complexity predominate over residues 29-38; the sequence is AGTGTSAGDN. Over residues 56 to 65 the composition is skewed to polar residues; the sequence is VTLTESLLNK.

As to quaternary structure, forms a heterodimer with timeless (TIM); the complex then translocates into the nucleus. Phosphorylated with a circadian rhythmicity, probably by the double-time protein (dbt). Phosphorylation could be implicated in the stability of per monomer and in the formation of heterodimer per-tim.

The protein resides in the nucleus. Its subcellular location is the cytoplasm. It localises to the perinuclear region. Its function is as follows. Essential for biological clock functions. Determines the period length of circadian and ultradian rhythms; an increase in PER dosage leads to shortened circadian rhythms and a decrease leads to lengthened circadian rhythms. Essential for the circadian rhythmicity of locomotor activity, eclosion behavior, and for the rhythmic component of the male courtship song that originates in the thoracic nervous system. The biological cycle depends on the rhythmic formation and nuclear localization of the TIM-PER complex. Light induces the degradation of TIM, which promotes elimination of PER. Nuclear activity of the heterodimer coordinatively regulates PER and TIM transcription through a negative feedback loop. Behaves as a negative element in circadian transcriptional loop. Does not appear to bind DNA, suggesting indirect transcriptional inhibition. In Drosophila mojavensis (Fruit fly), this protein is Period circadian protein (per).